The primary structure comprises 89 residues: Putative regulatory protein CPE1749 (89 aa).

Belongs to the RemA family.

The protein is Putative regulatory protein CPE1749 of Clostridium perfringens (strain 13 / Type A).